Consider the following 153-residue polypeptide: ATP synthase subunit b' (153 aa).

Residues threonine 20 to phenylalanine 40 form a helical membrane-spanning segment.

This sequence belongs to the ATPase B chain family. In terms of assembly, F-type ATPases have 2 components, F(1) - the catalytic core - and F(0) - the membrane proton channel. F(1) has five subunits: alpha(3), beta(3), gamma(1), delta(1), epsilon(1). F(0) has four main subunits: a(1), b(1), b'(1) and c(10-14). The alpha and beta chains form an alternating ring which encloses part of the gamma chain. F(1) is attached to F(0) by a central stalk formed by the gamma and epsilon chains, while a peripheral stalk is formed by the delta, b and b' chains.

It localises to the cellular thylakoid membrane. In terms of biological role, f(1)F(0) ATP synthase produces ATP from ADP in the presence of a proton or sodium gradient. F-type ATPases consist of two structural domains, F(1) containing the extramembraneous catalytic core and F(0) containing the membrane proton channel, linked together by a central stalk and a peripheral stalk. During catalysis, ATP synthesis in the catalytic domain of F(1) is coupled via a rotary mechanism of the central stalk subunits to proton translocation. Its function is as follows. Component of the F(0) channel, it forms part of the peripheral stalk, linking F(1) to F(0). The b'-subunit is a diverged and duplicated form of b found in plants and photosynthetic bacteria. This is ATP synthase subunit b' from Prochlorococcus marinus (strain NATL2A).